The following is a 403-amino-acid chain: Inhibitor of growth protein 3 (403 aa).

The disordered stretch occupies residues 112–149 (DTPSQPVNNHHAHSHTPVEKRKYNPTSHHTTTDHIPEK). Residues K133, K150, and K152 each participate in a glycyl lysine isopeptide (Lys-Gly) (interchain with G-Cter in SUMO2) cross-link. Residue K166 is modified to N6-acetyllysine. K241 is covalently cross-linked (Glycyl lysine isopeptide (Lys-Gly) (interchain with G-Cter in SUMO2)). An N6-acetyllysine modification is found at K249. The interval 271–310 (TQNASSSAADSRSGRKSKNNNKSSSQQSSSSSSSSSLSSC) is disordered. The span at 290 to 310 (NNKSSSQQSSSSSSSSSLSSC) shows a compositional bias: low complexity. Residues 345 to 394 (PRYCICNQVSYGEMVGCDNQDCPIEWFHYGCVGLTEAPKGKWYCPQCTAA) form a PHD-type zinc finger. Zn(2+) is bound by residues C348, C350, C361, C366, H372, C375, C388, and C391.

It belongs to the ING family. As to quaternary structure, interacts with H3K4me3 and to a lesser extent with H3K4me2. Component of the NuA4 histone acetyltransferase complex which contains the catalytic subunit KAT5/TIP60 and the subunits EP400, TRRAP/PAF400, BRD8/SMAP, EPC1, DMAP1/DNMAP1, RUVBL1/TIP49, RUVBL2, ING3, actin, ACTL6A/BAF53A, MORF4L1/MRG15, MORF4L2/MRGX, MRGBP, YEATS4/GAS41, VPS72/YL1 and MEAF6. The NuA4 complex interacts with MYC. HTATTIP/TIP60, EPC1, and ING3 together constitute a minimal HAT complex termed Piccolo NuA4. Component of a SWR1-like complex.

It is found in the nucleus. Component of the NuA4 histone acetyltransferase (HAT) complex which is involved in transcriptional activation of select genes principally by acetylation of nucleosomal histones H4 and H2A. This modification may both alter nucleosome - DNA interactions and promote interaction of the modified histones with other proteins which positively regulate transcription. This complex may be required for the activation of transcriptional programs associated with oncogene and proto-oncogene mediated growth induction, tumor suppressor mediated growth arrest and replicative senescence, apoptosis, and DNA repair. NuA4 may also play a direct role in DNA repair when directly recruited to sites of DNA damage. Component of a SWR1-like complex that specifically mediates the removal of histone H2A.Z/H2AZ1 from the nucleosome. This is Inhibitor of growth protein 3 (ING3) from Pongo abelii (Sumatran orangutan).